The sequence spans 106 residues: uncharacterized protein (106 aa).

2 consecutive transmembrane segments (helical) span residues 46-68 (LLQE…ILAF) and 73-92 (AVFI…LIAA).

It is found in the cell membrane. This is an uncharacterized protein from Bacillus subtilis (strain 168).